The sequence spans 384 residues: S-adenosylmethionine synthase (384 aa).

Histidine 15 lines the ATP pocket. Mg(2+) is bound at residue aspartate 17. Glutamate 43 is a K(+) binding site. L-methionine-binding residues include glutamate 56 and glutamine 99. Residues glutamine 99–arginine 109 form a flexible loop region. Residues aspartate 164–lysine 166, arginine 230–phenylalanine 231, aspartate 239, arginine 245–lysine 246, alanine 262, and lysine 266 each bind ATP. Aspartate 239 contacts L-methionine. Position 270 (lysine 270) interacts with L-methionine.

The protein belongs to the AdoMet synthase family. In terms of assembly, homotetramer; dimer of dimers. Mg(2+) is required as a cofactor. The cofactor is K(+).

It is found in the cytoplasm. The catalysed reaction is L-methionine + ATP + H2O = S-adenosyl-L-methionine + phosphate + diphosphate. The protein operates within amino-acid biosynthesis; S-adenosyl-L-methionine biosynthesis; S-adenosyl-L-methionine from L-methionine: step 1/1. In terms of biological role, catalyzes the formation of S-adenosylmethionine (AdoMet) from methionine and ATP. The overall synthetic reaction is composed of two sequential steps, AdoMet formation and the subsequent tripolyphosphate hydrolysis which occurs prior to release of AdoMet from the enzyme. The polypeptide is S-adenosylmethionine synthase (Cronobacter sakazakii (strain ATCC BAA-894) (Enterobacter sakazakii)).